The primary structure comprises 187 residues: Ribosome hibernation promotion factor (187 aa).

The protein belongs to the HPF/YfiA ribosome-associated protein family. Long HPF subfamily. As to quaternary structure, interacts with 100S ribosomes.

The protein localises to the cytoplasm. In terms of biological role, involved in 100S ribosome formation from 70S ribosomes; 100S ribosomes are probably translationally inactive. Ribosome hibernation may be used by the cell to decrease overall energy consumption under nutrient-limiting conditions. Unlike E.coli, 100S ribosomes are present from mid-exponential growth, peak during the transition from log to stationary phase and then decrease. This Listeria monocytogenes serotype 1/2a (strain 10403S) protein is Ribosome hibernation promotion factor.